The following is a 391-amino-acid chain: 1-deoxy-D-xylulose 5-phosphate reductoisomerase (391 aa).

NADPH is bound by residues Thr-17, Gly-18, Ser-19, Ile-20, Asn-47, and Asn-130. Residue Lys-131 coordinates 1-deoxy-D-xylulose 5-phosphate. NADPH is bound at residue Glu-132. Asp-156 is a Mn(2+) binding site. Residues Ser-157, Glu-158, Ser-182, and His-205 each contribute to the 1-deoxy-D-xylulose 5-phosphate site. Glu-158 lines the Mn(2+) pocket. Gly-211 contacts NADPH. Ser-218, Asn-223, Lys-224, and Glu-227 together coordinate 1-deoxy-D-xylulose 5-phosphate. Position 227 (Glu-227) interacts with Mn(2+).

It belongs to the DXR family. Mg(2+) is required as a cofactor. The cofactor is Mn(2+).

The catalysed reaction is 2-C-methyl-D-erythritol 4-phosphate + NADP(+) = 1-deoxy-D-xylulose 5-phosphate + NADPH + H(+). The protein operates within isoprenoid biosynthesis; isopentenyl diphosphate biosynthesis via DXP pathway; isopentenyl diphosphate from 1-deoxy-D-xylulose 5-phosphate: step 1/6. Its function is as follows. Catalyzes the NADPH-dependent rearrangement and reduction of 1-deoxy-D-xylulose-5-phosphate (DXP) to 2-C-methyl-D-erythritol 4-phosphate (MEP). This Sinorhizobium medicae (strain WSM419) (Ensifer medicae) protein is 1-deoxy-D-xylulose 5-phosphate reductoisomerase.